The chain runs to 646 residues: MSYTGFVQGSETTLQSTYSDTSAQPTCDYGYGTWNSGTNRGYEGYGYGYGYGQDNTTNYGYGMATSHSWEMPSSDTNANTSASGSASADSVLSRINQRLDMVPHLETDMMQGGVYGSGGERYDSYESCDSRAVLSERDLYRSGYDYSELDPEMEMAYEGQYDAYRDQFRMRGNDTFGPRAQGWARDARSGRPMASGYGRMWEDPMGARGQCMSGASRLPSLFSQNIIPEYGMFQGMRGGGAFPGGSRFGFGFGNGMKQMRRTWKTWTTADFRTKKKKRKQGGSPDEPDSKATRTDCSDNSDSDNDEGTEGEATEGLEGTEAVEKGSRVDGEDEEGKEDGREEGKEDPEKGALTTQDENGQTKRKLQAGKKSQDKQKKRQRDRMVERIQFVCSLCKYRTFYEDEMASHLDSKFHKEHFKYVGTKLPKQTADFLQEYVTNKTKKTEELRKTVEDLDGLIQQIYRDQDLTQEIAMEHFVKKVEAAHCAACDLFIPMQFGIIQKHLKTMDHNRNRRLMMEQSKKSSLMVARSILNNKLISKKLERYLKGENPFTDSPEEEKEQEEAEGGALDEGAQGEAAGISEGAEGVPAQPPVPPEPAPGAVSPPPPPPPEEEEEGAVPLLGGALQRQIRGIPGLDVEDDEEGGGGAP.

The interval 1-268 (MSYTGFVQGS…MRRTWKTWTT (268 aa)) is sufficient for activation of CTE-mediated expression. Position 208 is an asymmetric dimethylarginine; alternate (arginine 208). Arginine 208 carries the omega-N-methylarginine; alternate modification. Omega-N-methylarginine is present on residues arginine 217, arginine 237, and arginine 247. The residue at position 257 (lysine 257) is an N6-acetyllysine. A disordered region spans residues 264-381 (KTWTTADFRT…QDKQKKRQRD (118 aa)). Threonine 267 is subject to Phosphothreonine. The short motif at 274 to 279 (KKKKRK) is the Nuclear localization signal element. Positions 280–296 (QGGSPDEPDSKATRTDC) match the Nuclear export signal (NES) motif. Serine 283 is modified (phosphoserine). The span at 287 to 296 (PDSKATRTDC) shows a compositional bias: basic and acidic residues. A Phosphothreonine modification is found at threonine 292. Serine 297 is subject to Phosphoserine. Over residues 298–314 (DNSDSDNDEGTEGEATE) the composition is skewed to acidic residues. A compositionally biased stretch (basic and acidic residues) spans 337 to 349 (EDGREEGKEDPEK). A Nuclear localization signal motif is present at residues 362–364 (KRK). 2 consecutive C2H2 AKAP95-type zinc fingers follow at residues 391–413 (CSLC…SKFH) and 484–507 (CAAC…TMDH). The disordered stretch occupies residues 545–646 (GENPFTDSPE…DDEEGGGGAP (102 aa)). Serine 552 carries the phosphoserine modification. Residues 552–563 (SPEEEKEQEEAE) show a composition bias toward acidic residues. A compositionally biased stretch (low complexity) spans 564-586 (GGALDEGAQGEAAGISEGAEGVP). The span at 587-607 (AQPPVPPEPAPGAVSPPPPPP) shows a compositional bias: pro residues. Residues 634 to 646 (DVEDDEEGGGGAP) show a composition bias toward acidic residues.

The protein belongs to the AKAP95 family. Interacts (via N-terminus) with DHX9 (via RGG region). Interacts with TMPO isoform Beta, PRPF40A, RNF43, lamin-B. Interacts with HDAC3; increased during mitosis. Interacts with EBV EBNA-LP. Interacts with HIV-1 reverse transcriptase/ribonuclease H. Phosphorylated on serine or threonine residues possibly by PKA; probably modulating the interaction with TMPO isoform Beta. In terms of tissue distribution, ubiquitously expressed. Expressed in the brain cortex (at protein level).

It localises to the nucleus. The protein resides in the nucleus matrix. The protein localises to the nucleus speckle. It is found in the PML body. Its subcellular location is the cytoplasm. Functionally, could play a role in constitutive transport element (CTE)-mediated gene expression by association with DHX9. Increases CTE-dependent nuclear unspliced mRNA export. Proposed to target PRKACA to the nucleus but does not seem to be implicated in the binding of regulatory subunit II of PKA. May be involved in nuclear envelope breakdown and chromatin condensation. May be involved in anchoring nuclear membranes to chromatin in interphase and in releasing membranes from chromating at mitosis. May regulate the initiation phase of DNA replication when associated with TMPO isoform Beta. Required for cell cycle G2/M transition and histone deacetylation during mitosis. In mitotic cells recruits HDAC3 to the vicinity of chromatin leading to deacetylation and subsequent phosphorylation at 'Ser-10' of histone H3; in this function seems to act redundantly with AKAP8. May be involved in regulation of pre-mRNA splicing. (Microbial infection) In case of EBV infection, may target PRKACA to EBNA-LP-containing nuclear sites to modulate transcription from specific promoters. Its function is as follows. (Microbial infection) Can synergize with DHX9 to activate the CTE-mediated gene expression of type D retroviruses. In terms of biological role, (Microbial infection) In case of HIV-1 infection, involved in the DHX9-promoted annealing of host tRNA(Lys3) to viral genomic RNA as a primer in reverse transcription; in vitro negatively regulates DHX9 annealing activity. In Homo sapiens (Human), this protein is A-kinase anchor protein 8-like (AKAP8L).